Reading from the N-terminus, the 172-residue chain is uncharacterized protein (172 aa).

A compositionally biased stretch (gly residues) spans 147-159 (AGSGSGSGSGSGS). Positions 147–172 (AGSGSGSGSGSGSDTGPFKKSQYKIL) are disordered.

This is an uncharacterized protein from Homo sapiens (Human).